The chain runs to 150 residues: 3-hydroxyacyl-[acyl-carrier-protein] dehydratase FabZ (150 aa).

The active site involves His-54.

The protein belongs to the thioester dehydratase family. FabZ subfamily.

Its subcellular location is the cytoplasm. It carries out the reaction a (3R)-hydroxyacyl-[ACP] = a (2E)-enoyl-[ACP] + H2O. In terms of biological role, involved in unsaturated fatty acids biosynthesis. Catalyzes the dehydration of short chain beta-hydroxyacyl-ACPs and long chain saturated and unsaturated beta-hydroxyacyl-ACPs. In Vibrio vulnificus (strain CMCP6), this protein is 3-hydroxyacyl-[acyl-carrier-protein] dehydratase FabZ.